The sequence spans 295 residues: Serpentine receptor class gamma-53 (295 aa).

6 helical membrane-spanning segments follow: residues isoleucine 7–serine 27, valine 39–phenylalanine 61, phenylalanine 121–tyrosine 141, cysteine 173–valine 193, methionine 211–threonine 230, and isoleucine 241–isoleucine 261.

Belongs to the nematode receptor-like protein srg family.

It localises to the membrane. The chain is Serpentine receptor class gamma-53 (srg-53) from Caenorhabditis elegans.